Consider the following 470-residue polypeptide: Uronate isomerase (470 aa).

It belongs to the metallo-dependent hydrolases superfamily. Uronate isomerase family.

It carries out the reaction D-glucuronate = D-fructuronate. The enzyme catalyses aldehydo-D-galacturonate = keto-D-tagaturonate. The protein operates within carbohydrate metabolism; pentose and glucuronate interconversion. In Escherichia coli O8 (strain IAI1), this protein is Uronate isomerase.